The primary structure comprises 190 residues: MSHADEHAGDHGATRRDFLYYATAGAGTVAAGAAAWTLVNQMNPSADVQALASIQVDVSGVETGTQLTVKWLGKPVFIRRRTEDEIQAGREVDLGQLIDRSAQNSNKPDAPATDENRTMDEAGEWLVMIGVCTHLGCVPIGDGAGDFGGWFCPCHGSHYDTSGRIRRGPAPQNLHIPVAEFLDDTTIKLG.

A helical membrane pass occupies residues 18–39 (FLYYATAGAGTVAAGAAAWTLV). The 94-residue stretch at 95 to 188 (GQLIDRSAQN…AEFLDDTTIK (94 aa)) folds into the Rieske domain. [2Fe-2S] cluster contacts are provided by Cys-132, His-134, Cys-152, and His-155. The cysteines at positions 137 and 154 are disulfide-linked.

This sequence belongs to the Rieske iron-sulfur protein family. As to quaternary structure, the main subunits of complex b-c1 are: cytochrome b, cytochrome c1 and the Rieske protein. [2Fe-2S] cluster is required as a cofactor.

It is found in the cell membrane. It carries out the reaction a quinol + 2 Fe(III)-[cytochrome c](out) = a quinone + 2 Fe(II)-[cytochrome c](out) + 2 H(+)(out). Functionally, component of the ubiquinol-cytochrome c reductase complex (complex III or cytochrome b-c1 complex), which is a respiratory chain that generates an electrochemical potential coupled to ATP synthesis. This is Ubiquinol-cytochrome c reductase iron-sulfur subunit (petA) from Paracoccus denitrificans.